A 217-amino-acid chain; its full sequence is Transmembrane emp24 domain-containing protein p24delta6 (217 aa).

The signal sequence occupies residues 1–26; that stretch reads MAISPVLFIGLIYLAGGGSLFPGVEA. Residues 27 to 186 lie on the Lumenal side of the membrane; the sequence is IWLTVPESGE…INEKTNTRVN (160 aa). A GOLD domain is found at 36 to 152; that stretch reads ERCVYEEIQA…IEGVELEIRR (117 aa). N-linked (GlcNAc...) asparagine glycans are attached at residues N84 and N116. A coiled-coil region spans residues 138-160; that stretch reads AKKEKIEGVELEIRRSTEYASAI. Omega-N-methylated arginine occurs at positions 170 and 175. The helical transmembrane segment at 187–207 threads the bilayer; it reads QLGLMSLGVAIVVSISQVLYL. Over 208–217 the chain is Cytoplasmic; it reads KRYFLKKKLI. The COPII vesicle coat-binding signature appears at 210 to 211; that stretch reads YF. Positions 210–217 match the COPI vesicle coat-binding motif; sequence YFLKKKLI.

Belongs to the EMP24/GP25L family. As to quaternary structure, probably oligomerizes with other members of the EMP24/GP25L family. Associates with the COPI vesicle coat (coatomer). Associates with the COPII vesicle coat (coatomer).

It is found in the endoplasmic reticulum membrane. Its function is as follows. Involved in vesicular protein trafficking. Mainly functions in the early secretory pathway. Thought to act as cargo receptor at the lumenal side for incorporation of secretory cargo molecules into transport vesicles and to be involved in vesicle coat formation at the cytoplasmic side. The sequence is that of Transmembrane emp24 domain-containing protein p24delta6 from Arabidopsis thaliana (Mouse-ear cress).